A 122-amino-acid chain; its full sequence is Flagellar hook-basal body complex protein FliE (122 aa).

The protein belongs to the FliE family.

Its subcellular location is the bacterial flagellum basal body. The protein is Flagellar hook-basal body complex protein FliE of Marinobacter nauticus (strain ATCC 700491 / DSM 11845 / VT8) (Marinobacter aquaeolei).